Reading from the N-terminus, the 408-residue chain is Phosphopentomutase (408 aa).

Mn(2+) contacts are provided by Asp-10, Asp-303, His-308, Asp-344, His-345, and His-356.

This sequence belongs to the phosphopentomutase family. Mn(2+) serves as cofactor.

It is found in the cytoplasm. It carries out the reaction 2-deoxy-alpha-D-ribose 1-phosphate = 2-deoxy-D-ribose 5-phosphate. The catalysed reaction is alpha-D-ribose 1-phosphate = D-ribose 5-phosphate. Its pathway is carbohydrate degradation; 2-deoxy-D-ribose 1-phosphate degradation; D-glyceraldehyde 3-phosphate and acetaldehyde from 2-deoxy-alpha-D-ribose 1-phosphate: step 1/2. Isomerase that catalyzes the conversion of deoxy-ribose 1-phosphate (dRib-1-P) and ribose 1-phosphate (Rib-1-P) to deoxy-ribose 5-phosphate (dRib-5-P) and ribose 5-phosphate (Rib-5-P), respectively. This is Phosphopentomutase from Tolumonas auensis (strain DSM 9187 / NBRC 110442 / TA 4).